The primary structure comprises 426 residues: Glutamyl-tRNA reductase (426 aa).

Substrate contacts are provided by residues 49-52 (TCNR), Ser-110, 115-117 (EAQ), and Gln-121. The active-site Nucleophile is the Cys-50. 191–196 (GAGEMA) contacts NADP(+).

This sequence belongs to the glutamyl-tRNA reductase family. As to quaternary structure, homodimer.

The enzyme catalyses (S)-4-amino-5-oxopentanoate + tRNA(Glu) + NADP(+) = L-glutamyl-tRNA(Glu) + NADPH + H(+). The protein operates within porphyrin-containing compound metabolism; protoporphyrin-IX biosynthesis; 5-aminolevulinate from L-glutamyl-tRNA(Glu): step 1/2. Catalyzes the NADPH-dependent reduction of glutamyl-tRNA(Glu) to glutamate 1-semialdehyde (GSA). This is Glutamyl-tRNA reductase from Rhodopirellula baltica (strain DSM 10527 / NCIMB 13988 / SH1).